We begin with the raw amino-acid sequence, 343 residues long: Cytoplasmic tRNA 2-thiolation protein 1 (343 aa).

It belongs to the TtcA family. CTU1/NCS6/ATPBD3 subfamily.

It is found in the cytoplasm. It participates in tRNA modification; 5-methoxycarbonylmethyl-2-thiouridine-tRNA biosynthesis. Its function is as follows. Plays a central role in 2-thiolation of mcm(5)S(2)U at tRNA wobble positions of tRNA(Lys), tRNA(Glu) and tRNA(Gln). Directly binds tRNAs and probably acts by catalyzing adenylation of tRNAs, an intermediate required for 2-thiolation. It is unclear whether it acts as a sulfurtransferase that transfers sulfur from thiocarboxylated URM1 onto the uridine of tRNAs at wobble position. In Drosophila grimshawi (Hawaiian fruit fly), this protein is Cytoplasmic tRNA 2-thiolation protein 1.